The sequence spans 134 residues: Early E3B 14.9 kDa protein (134 aa).

An N-terminal signal peptide occupies residues 1-19 (MQAMLPVILILLLPCIALA). A helical transmembrane segment spans residues 54–78 (YWIVIVGIINILSCTFFSITIYPTF).

This sequence belongs to the adenoviridae E3_14 family. In terms of processing, phosphorylated on serine; O-glycosylated, but not N-glycosylated.

The protein resides in the host membrane. Down-regulates the EGF receptor and prevents cytolysis by TNF. The protein is Early E3B 14.9 kDa protein of Homo sapiens (Human).